A 126-amino-acid chain; its full sequence is Aspartate 1-decarboxylase (126 aa).

Residue Ser-25 is the Schiff-base intermediate with substrate; via pyruvic acid of the active site. Ser-25 carries the post-translational modification Pyruvic acid (Ser). Substrate is bound at residue Thr-57. Tyr-58 serves as the catalytic Proton donor. Position 73–75 (73–75 (GAA)) interacts with substrate.

This sequence belongs to the PanD family. Heterooctamer of four alpha and four beta subunits. Pyruvate is required as a cofactor. Post-translationally, is synthesized initially as an inactive proenzyme, which is activated by self-cleavage at a specific serine bond to produce a beta-subunit with a hydroxyl group at its C-terminus and an alpha-subunit with a pyruvoyl group at its N-terminus.

It localises to the cytoplasm. It catalyses the reaction L-aspartate + H(+) = beta-alanine + CO2. It functions in the pathway cofactor biosynthesis; (R)-pantothenate biosynthesis; beta-alanine from L-aspartate: step 1/1. Catalyzes the pyruvoyl-dependent decarboxylation of aspartate to produce beta-alanine. The sequence is that of Aspartate 1-decarboxylase from Yersinia pestis bv. Antiqua (strain Antiqua).